Consider the following 329-residue polypeptide: Ribosomal RNA small subunit methyltransferase H (329 aa).

S-adenosyl-L-methionine contacts are provided by residues 39–41 (GGY), D57, F84, D100, and Q107. The interval 285–305 (GPDKDELAQNPRSRSALLRVG) is disordered.

It belongs to the methyltransferase superfamily. RsmH family.

Its subcellular location is the cytoplasm. It catalyses the reaction cytidine(1402) in 16S rRNA + S-adenosyl-L-methionine = N(4)-methylcytidine(1402) in 16S rRNA + S-adenosyl-L-homocysteine + H(+). In terms of biological role, specifically methylates the N4 position of cytidine in position 1402 (C1402) of 16S rRNA. The protein is Ribosomal RNA small subunit methyltransferase H of Ruegeria sp. (strain TM1040) (Silicibacter sp.).